The sequence spans 288 residues: Elongation factor Ts (288 aa).

The interval 82 to 85 is involved in Mg(2+) ion dislocation from EF-Tu; that stretch reads TDFV.

It belongs to the EF-Ts family.

It localises to the cytoplasm. Functionally, associates with the EF-Tu.GDP complex and induces the exchange of GDP to GTP. It remains bound to the aminoacyl-tRNA.EF-Tu.GTP complex up to the GTP hydrolysis stage on the ribosome. The sequence is that of Elongation factor Ts from Chlorobaculum tepidum (strain ATCC 49652 / DSM 12025 / NBRC 103806 / TLS) (Chlorobium tepidum).